Consider the following 300-residue polypeptide: 4-hydroxy-tetrahydrodipicolinate synthase (300 aa).

T49 serves as a coordination point for pyruvate. Y137 functions as the Proton donor/acceptor in the catalytic mechanism. The active-site Schiff-base intermediate with substrate is the K166. I208 serves as a coordination point for pyruvate.

The protein belongs to the DapA family. In terms of assembly, homotetramer; dimer of dimers.

The protein localises to the cytoplasm. The catalysed reaction is L-aspartate 4-semialdehyde + pyruvate = (2S,4S)-4-hydroxy-2,3,4,5-tetrahydrodipicolinate + H2O + H(+). Its pathway is amino-acid biosynthesis; L-lysine biosynthesis via DAP pathway; (S)-tetrahydrodipicolinate from L-aspartate: step 3/4. Functionally, catalyzes the condensation of (S)-aspartate-beta-semialdehyde [(S)-ASA] and pyruvate to 4-hydroxy-tetrahydrodipicolinate (HTPA). The sequence is that of 4-hydroxy-tetrahydrodipicolinate synthase from Methanopyrus kandleri (strain AV19 / DSM 6324 / JCM 9639 / NBRC 100938).